The chain runs to 508 residues: DDB1- and CUL4-associated factor 10 (508 aa).

The segment at M1–G75 is disordered. A compositionally biased stretch (basic and acidic residues) spans S7–L17. The segment covering R18 to E32 has biased composition (acidic residues). A compositionally biased stretch (gly residues) spans G63–G75. WD repeat units follow at residues Q126–T165, A169–C207, G211–C250, and F256–E295. Positions P307–S343 are disordered. Over residues H325–L338 the composition is skewed to basic and acidic residues. 3 WD repeats span residues D356 to A396, V419 to V457, and S475 to F508.

Belongs to the WD repeat DCAF10 family.

It functions in the pathway protein modification; protein ubiquitination. Functionally, may function as a substrate receptor for CUL4-DDB1 E3 ubiquitin-protein ligase complex. This is DDB1- and CUL4-associated factor 10 (dcaf10) from Danio rerio (Zebrafish).